Here is a 161-residue protein sequence, read N- to C-terminus: Tick receptor for ospA (161 aa).

In terms of assembly, interacts with ospA protein from B.burgdorferi. In terms of processing, glycosylated. Specifically expressed in gut. Localizes predominantly in the intercellular spaces and luminal surface of the gut. In the gut, it localizes along tight junctions. Not expressed in salivary gland or hemolymph.

The protein localises to the cell membrane. Its function is as follows. Serves as a receptor for ospA protein of B.burgdorferi, the Lyme disease agent. Required for spirochetal colonization. Essential for pathogen adherence to the vector. The polypeptide is Tick receptor for ospA (TROSPA) (Ixodes scapularis (Black-legged tick)).